Here is a 213-residue protein sequence, read N- to C-terminus: Motile sperm domain-containing protein 1 (213 aa).

The MSP domain maps to 16–143 (PVFVFPTELI…KEHLTESVFF (128 aa)). Helical transmembrane passes span 159-179 (SLLTVFLGVVCIAALMLPTLG) and 191-211 (LSVNQKLVAAYILGLITMAIL). The short motif at 205-208 (LITM) is the Nuclear export signal element.

It is found in the endoplasmic reticulum membrane. Its subcellular location is the golgi apparatus membrane. Functionally, plays a role in differentiation and/or proliferation of mesenchymal stem cells. Proposed to be involved in epithelial-to-mesenchymal transition (EMT). However, another study suggests that it is not required for EMT or stem cell self-renewal and acts during later stages of differentiation. The protein is Motile sperm domain-containing protein 1 (Mospd1) of Rattus norvegicus (Rat).